The primary structure comprises 1097 residues: DNA-directed RNA polymerase subunit beta (1097 aa).

The tract at residues 1072-1097 is disordered; the sequence is QDVNPRRSTPSRPTYESLGVADYDED.

The protein belongs to the RNA polymerase beta chain family. As to quaternary structure, in cyanobacteria the RNAP catalytic core is composed of 2 alpha, 1 beta, 1 beta', 1 gamma and 1 omega subunit. When a sigma factor is associated with the core the holoenzyme is formed, which can initiate transcription.

It catalyses the reaction RNA(n) + a ribonucleoside 5'-triphosphate = RNA(n+1) + diphosphate. In terms of biological role, DNA-dependent RNA polymerase catalyzes the transcription of DNA into RNA using the four ribonucleoside triphosphates as substrates. This Synechococcus sp. (strain CC9902) protein is DNA-directed RNA polymerase subunit beta.